A 64-amino-acid polypeptide reads, in one-letter code: Large ribosomal subunit protein bL35 (64 aa).

A disordered region spans residues 1-23; sequence MPKMKTHRGAAKRFKKTKNKIKR.

It belongs to the bacterial ribosomal protein bL35 family.

This chain is Large ribosomal subunit protein bL35, found in Nitratiruptor sp. (strain SB155-2).